A 527-amino-acid polypeptide reads, in one-letter code: Amidophosphoribosyltransferase (527 aa).

Residues Met1–Ser30 are disordered. Positions Met1–Glu34 are excised as a propeptide. Residues Ser15–Asn29 show a composition bias toward polar residues. Catalysis depends on Cys35, which acts as the Nucleophile. The region spanning Cys35–Asp261 is the Glutamine amidotransferase type-2 domain. Cys276 is a binding site for [4Fe-4S] cluster. The Mg(2+) site is built by Ser323, Asp385, and Asp386. Cys422, Cys478, and Cys481 together coordinate [4Fe-4S] cluster.

The protein in the C-terminal section; belongs to the purine/pyrimidine phosphoribosyltransferase family. Mg(2+) serves as cofactor. Requires [4Fe-4S] cluster as cofactor.

It catalyses the reaction 5-phospho-beta-D-ribosylamine + L-glutamate + diphosphate = 5-phospho-alpha-D-ribose 1-diphosphate + L-glutamine + H2O. It participates in purine metabolism; IMP biosynthesis via de novo pathway; N(1)-(5-phospho-D-ribosyl)glycinamide from 5-phospho-alpha-D-ribose 1-diphosphate: step 1/2. Functionally, catalyzes the formation of phosphoribosylamine from phosphoribosylpyrophosphate (PRPP) and glutamine. This Mycobacterium bovis (strain ATCC BAA-935 / AF2122/97) protein is Amidophosphoribosyltransferase.